Here is a 360-residue protein sequence, read N- to C-terminus: Phospho-N-acetylmuramoyl-pentapeptide-transferase (360 aa).

The next 10 helical transmembrane spans lie at 27–47 (GAMI…INSL), 71–91 (TPTM…LLWA), 93–113 (LASV…AIGF), 128–148 (FSGK…AFTI), 168–188 (LVIN…VGAG), 199–219 (GLAI…AYLS), 239–259 (LAVV…FNAP), 262–282 (AIFM…TVAV), 288–308 (IVLA…IIQV), and 337–357 (QVVI…LSTL).

Belongs to the glycosyltransferase 4 family. MraY subfamily. The cofactor is Mg(2+).

The protein localises to the cell inner membrane. The catalysed reaction is UDP-N-acetyl-alpha-D-muramoyl-L-alanyl-gamma-D-glutamyl-meso-2,6-diaminopimeloyl-D-alanyl-D-alanine + di-trans,octa-cis-undecaprenyl phosphate = di-trans,octa-cis-undecaprenyl diphospho-N-acetyl-alpha-D-muramoyl-L-alanyl-D-glutamyl-meso-2,6-diaminopimeloyl-D-alanyl-D-alanine + UMP. It participates in cell wall biogenesis; peptidoglycan biosynthesis. Catalyzes the initial step of the lipid cycle reactions in the biosynthesis of the cell wall peptidoglycan: transfers peptidoglycan precursor phospho-MurNAc-pentapeptide from UDP-MurNAc-pentapeptide onto the lipid carrier undecaprenyl phosphate, yielding undecaprenyl-pyrophosphoryl-MurNAc-pentapeptide, known as lipid I. The polypeptide is Phospho-N-acetylmuramoyl-pentapeptide-transferase (Brucella abortus (strain S19)).